Reading from the N-terminus, the 292-residue chain is Tetratricopeptide repeat protein 1 (292 aa).

Composition is skewed to basic and acidic residues over residues 1 to 12 (MEEKSEDCKVPE) and 47 to 64 (KAAE…ECFH). A disordered region spans residues 1–125 (MEEKSEDCKV…SAKLKEEGNE (125 aa)). A compositionally biased stretch (acidic residues) spans 88–98 (SSSELDEEYLI). Residue Ser90 is modified to Phosphoserine. Over residues 99–125 (ELEKNMPEEEKQKRREESAKLKEEGNE) the composition is skewed to basic and acidic residues. 3 TPR repeats span residues 116–149 (SAKL…CPAC), 155–188 (SVLF…NPTY), and 189–222 (IRAI…DPSV).

Interacts with the GAP domain of NF1. Interacts (via TPR repeats) with HSP90AA1 and HSPA8.

This Mus musculus (Mouse) protein is Tetratricopeptide repeat protein 1 (Ttc1).